The chain runs to 273 residues: Putative peptidyl-prolyl cis-trans isomerase Cbf2 (273 aa).

The N-terminal stretch at 1–21 is a signal peptide; sequence MKKFSLVAATLIAGVVLNVNA. In terms of domain architecture, PpiC spans 131–228; the sequence is PARVQAKHIL…FGYHVILKEN (98 aa).

The catalysed reaction is [protein]-peptidylproline (omega=180) = [protein]-peptidylproline (omega=0). The chain is Putative peptidyl-prolyl cis-trans isomerase Cbf2 (cbf2) from Campylobacter jejuni subsp. jejuni serotype O:2 (strain ATCC 700819 / NCTC 11168).